We begin with the raw amino-acid sequence, 392 residues long: Formate-dependent phosphoribosylglycinamide formyltransferase (392 aa).

N(1)-(5-phospho-beta-D-ribosyl)glycinamide-binding positions include 22-23 (EL) and E82. ATP is bound by residues R114, K155, 160-165 (SSGKGQ), 195-198 (EGVV), and E203. An ATP-grasp domain is found at 119–308 (RLAAEELQLP…EFALHVRAFL (190 aa)). E267 and E279 together coordinate Mg(2+). Residues D286, K355, and 362 to 363 (RR) each bind N(1)-(5-phospho-beta-D-ribosyl)glycinamide.

The protein belongs to the PurK/PurT family. Homodimer.

The enzyme catalyses N(1)-(5-phospho-beta-D-ribosyl)glycinamide + formate + ATP = N(2)-formyl-N(1)-(5-phospho-beta-D-ribosyl)glycinamide + ADP + phosphate + H(+). It participates in purine metabolism; IMP biosynthesis via de novo pathway; N(2)-formyl-N(1)-(5-phospho-D-ribosyl)glycinamide from N(1)-(5-phospho-D-ribosyl)glycinamide (formate route): step 1/1. Involved in the de novo purine biosynthesis. Catalyzes the transfer of formate to 5-phospho-ribosyl-glycinamide (GAR), producing 5-phospho-ribosyl-N-formylglycinamide (FGAR). Formate is provided by PurU via hydrolysis of 10-formyl-tetrahydrofolate. The sequence is that of Formate-dependent phosphoribosylglycinamide formyltransferase from Shigella boydii serotype 18 (strain CDC 3083-94 / BS512).